Reading from the N-terminus, the 313-residue chain is Catalase-related peroxidase (313 aa).

The active site involves His28. Position 294 (Tyr294) interacts with heme.

It belongs to the catalase family. Monomer. It depends on heme as a cofactor.

Functionally, has an organic peroxide-dependent peroxidase activity. Exhibits strong peroxidase activity using organic hydroperoxides as cosubstrates, weak peroxidase activity using hydrogen peroxide and negligible catalase activity. May have a role in elimination of reactive oxygen species, in particular by deactivating hydroperoxides. This is Catalase-related peroxidase from Mycolicibacterium paratuberculosis (strain ATCC BAA-968 / K-10) (Mycobacterium paratuberculosis).